A 616-amino-acid polypeptide reads, in one-letter code: MSPNDAFISAPAKIETPVGPRNEGQPAWNKQRGSSMPVNRYMPFEVEVEDISLPDRTWPDKKITVAPQWCAVDLRDGNQALIDPMSPERKRRMFELLVQMGFKEIEVGFPSASQTDFDFVREIIEKDMIPDDVTIQVLVQAREHLIRRTFEACEGAKNVIVHFYNSTSILQRNVVFRMDKDQVKKLATDAAELIKTIAQDYPDTNWRWQYSPESFTGTEVEYAKEVVDAVVEVMDPTPENPMIINLPSTVEMITPNVYADSIEWMHRNVNRRDSIILSLHPHNDRGTGVGAAELGYMAGADRIEGCLFGNGERTGNVCLVTLALNMLTQGVDPQLDFTDIRQIRSTVEYCNQLRVPERHPYAGDLVFTAFSGSHQDAVNKGLDAMAAKVKPGANSTDVSWEELRDTEWEVPYLPIDPKDVGRDYEAVIRVNSQSGKGGVAYIMKTDHGLQIPRSMQVEFSAVVQNVTDAEGGEVNSKAMWDIFATEYLERTAPVEQIALRVENAQTENEDASITAELIHNGKDVTVDGHGNGPLAAYANALEKLGIDVEIQEYNQHARTSGDDAEAAAYVLAEVNGRKVWGVGIAGSITYASLKAVTSAVNRALDVNHEAVLAGGV.

The interval 1 to 34 is disordered; it reads MSPNDAFISAPAKIETPVGPRNEGQPAWNKQRGS. A Pyruvate carboxyltransferase domain is found at 67–341; that stretch reads PQWCAVDLRD…DPQLDFTDIR (275 aa). Residues Asp76, His280, His282, and Asn316 each coordinate Mg(2+). Positions 490-616 are regulatory domain; it reads RTAPVEQIAL…NHEAVLAGGV (127 aa).

It belongs to the alpha-IPM synthase/homocitrate synthase family. LeuA type 2 subfamily. Homodimer. Requires Mg(2+) as cofactor.

The protein localises to the cytoplasm. The enzyme catalyses 3-methyl-2-oxobutanoate + acetyl-CoA + H2O = (2S)-2-isopropylmalate + CoA + H(+). It functions in the pathway amino-acid biosynthesis; L-leucine biosynthesis; L-leucine from 3-methyl-2-oxobutanoate: step 1/4. In terms of biological role, catalyzes the condensation of the acetyl group of acetyl-CoA with 3-methyl-2-oxobutanoate (2-ketoisovalerate) to form 3-carboxy-3-hydroxy-4-methylpentanoate (2-isopropylmalate). The sequence is that of 2-isopropylmalate synthase from Corynebacterium glutamicum (strain R).